A 1226-amino-acid chain; its full sequence is Probable phosphorylase b kinase regulatory subunit alpha (1226 aa).

The interval 666-688 is disordered; the sequence is NEKITTPRGPRTLRRGESVKDRS. Basic and acidic residues predominate over residues 679–688; the sequence is RRGESVKDRS.

This sequence belongs to the phosphorylase b kinase regulatory chain family.

It functions in the pathway glycan biosynthesis; glycogen metabolism. In terms of biological role, phosphorylase b kinase catalyzes the phosphorylation of serine in certain substrates, including troponin I. The alpha chain may bind calmodulin. This is Probable phosphorylase b kinase regulatory subunit alpha from Caenorhabditis elegans.